The following is a 140-amino-acid chain: ATP synthase epsilon chain (140 aa).

It belongs to the ATPase epsilon chain family. F-type ATPases have 2 components, CF(1) - the catalytic core - and CF(0) - the membrane proton channel. CF(1) has five subunits: alpha(3), beta(3), gamma(1), delta(1), epsilon(1). CF(0) has three main subunits: a, b and c.

It is found in the cell inner membrane. Functionally, produces ATP from ADP in the presence of a proton gradient across the membrane. This is ATP synthase epsilon chain from Neisseria meningitidis serogroup B (strain ATCC BAA-335 / MC58).